The primary structure comprises 355 residues: Uroporphyrinogen decarboxylase (355 aa).

Substrate contacts are provided by residues 36 to 40, Asp85, Tyr160, Ser215, and His334; that span reads RQAGR.

This sequence belongs to the uroporphyrinogen decarboxylase family. As to quaternary structure, homodimer.

It is found in the cytoplasm. It carries out the reaction uroporphyrinogen III + 4 H(+) = coproporphyrinogen III + 4 CO2. The protein operates within porphyrin-containing compound metabolism; protoporphyrin-IX biosynthesis; coproporphyrinogen-III from 5-aminolevulinate: step 4/4. Its function is as follows. Catalyzes the decarboxylation of four acetate groups of uroporphyrinogen-III to yield coproporphyrinogen-III. This is Uroporphyrinogen decarboxylase from Rhodococcus opacus (strain B4).